An 83-amino-acid chain; its full sequence is METLLLTLLVVTIVCLDLGYTLECHNQQSSQTPTTTGCSGGETNCYKKRWRDHRGYRTERGCGCPSVKNGIEINCCTTDRCNN.

An N-terminal signal peptide occupies residues 1–21 (METLLLTLLVVTIVCLDLGYT). 4 cysteine pairs are disulfide-bonded: Cys-24–Cys-45, Cys-38–Cys-62, Cys-64–Cys-75, and Cys-76–Cys-81.

It belongs to the three-finger toxin family. Short-chain subfamily. Type I alpha-neurotoxin sub-subfamily. As to expression, expressed by the venom gland.

It localises to the secreted. In terms of biological role, binds to muscle nicotinic acetylcholine receptor (nAChR) and inhibit acetylcholine from binding to the receptor, thereby impairing neuromuscular transmission. In Naja naja (Indian cobra), this protein is Cobrotoxin homolog.